The following is a 704-amino-acid chain: Polyribonucleotide nucleotidyltransferase (704 aa).

2 residues coordinate Mg(2+): D487 and D493. One can recognise a KH domain in the interval P554 to I613. Positions G623–K691 constitute an S1 motif domain.

The protein belongs to the polyribonucleotide nucleotidyltransferase family. Component of the RNA degradosome, which is a multiprotein complex involved in RNA processing and mRNA degradation. Requires Mg(2+) as cofactor.

The protein localises to the cytoplasm. It carries out the reaction RNA(n+1) + phosphate = RNA(n) + a ribonucleoside 5'-diphosphate. Its function is as follows. Involved in mRNA degradation. Catalyzes the phosphorolysis of single-stranded polyribonucleotides processively in the 3'- to 5'-direction. The sequence is that of Polyribonucleotide nucleotidyltransferase from Xanthomonas euvesicatoria pv. vesicatoria (strain 85-10) (Xanthomonas campestris pv. vesicatoria).